Reading from the N-terminus, the 382-residue chain is Tuliposide A-converting enzyme 2, chloroplastic (382 aa).

The transit peptide at 1 to 74 directs the protein to the chloroplast; sequence MSVASFFSSL…PSPSLSPTPT (74 aa). Catalysis depends on Ser232, which acts as the Acyl-ester intermediate. Catalysis depends on charge relay system residues Asp324 and His356.

It belongs to the AB hydrolase superfamily. As to quaternary structure, homodimer. As to expression, expressed in roots, stems, leaves, petals, stamens and pistils, but not in bulb scales.

The protein resides in the plastid. It is found in the chloroplast. The enzyme catalyses 6-tuliposide A = tulipalin A + D-glucose. Its activity is regulated as follows. Inhibited by NaF, AgNO(3), HgCl(2), CuSO(4) and phenylmethylsulfonyl fluoride (PMSF). Functionally, lactone-forming carboxylesterases, specifically catalyzing intramolecular transesterification, but not hydrolysis. Involved in the biosynthesis of tulipalins, defensive chemicals that show antimicrobial activities against a broad range of strains of bacteria and fungi. Substrates are 6-tuliposide A &gt; 6-tuliposide B. The sequence is that of Tuliposide A-converting enzyme 2, chloroplastic (TCEA2) from Tulipa gesneriana (Garden tulip).